The primary structure comprises 359 residues: 3-isopropylmalate dehydrogenase (359 aa).

An NAD(+)-binding site is contributed by 77 to 88 (GPKWGTGDVRPE). Substrate-binding residues include R95, R105, R134, and D223. Mg(2+) contacts are provided by D223, D248, and D252. 287 to 298 (GSAPDLPAGKVN) provides a ligand contact to NAD(+).

It belongs to the isocitrate and isopropylmalate dehydrogenases family. In terms of assembly, homodimer. The cofactor is Mg(2+). Requires Mn(2+) as cofactor.

The protein resides in the cytoplasm. The enzyme catalyses (2R,3S)-3-isopropylmalate + NAD(+) = 4-methyl-2-oxopentanoate + CO2 + NADH. The protein operates within amino-acid biosynthesis; L-leucine biosynthesis; L-leucine from 3-methyl-2-oxobutanoate: step 3/4. In terms of biological role, catalyzes the oxidation of 3-carboxy-2-hydroxy-4-methylpentanoate (3-isopropylmalate) to 3-carboxy-4-methyl-2-oxopentanoate. The product decarboxylates to 4-methyl-2 oxopentanoate. The protein is 3-isopropylmalate dehydrogenase (LEU2) of Diutina rugosa (Yeast).